A 1969-amino-acid chain; its full sequence is TP53-binding protein 1 (1969 aa).

The tract at residues 1 to 24 (MPGEQMDPTGSQLDSDFSQQDTPC) is disordered. A compositionally biased stretch (polar residues) spans 8–22 (PTGSQLDSDFSQQDT). S30, S68, and S73 each carry phosphoserine. Residues 67 to 168 (VSNPEQSAVE…DSLAAEDSAS (102 aa)) are disordered. Positions 69–85 (NPEQSAVEQGDSNSSFN) are enriched in polar residues. Residues 86–95 (EHLKEKKASD) are compositionally biased toward basic and acidic residues. Residues 101-110 (HLGTSGSISQ) show a composition bias toward polar residues. S109 bears the Phosphoserine mark. Over residues 135-148 (PEEEKEEEELEEEK) the composition is skewed to acidic residues. A compositionally biased stretch (low complexity) spans 158–168 (ADSLAAEDSAS). Phosphoserine occurs at positions 169, 179, and 181. A Glycyl lysine isopeptide (Lys-Gly) (interchain with G-Cter in SUMO1); alternate cross-link involves residue K220. A Glycyl lysine isopeptide (Lys-Gly) (interchain with G-Cter in SUMO2); alternate cross-link involves residue K220. Disordered regions lie at residues 254-337 (EQNL…VSTP), 352-599 (LVQE…CKGR), and 614-707 (DSGS…CPEA). S267 and S268 each carry phosphoserine. The segment covering 277-288 (ETKEQVPARELL) has biased composition (basic and acidic residues). Polar residues predominate over residues 294–324 (VQPSSEPEVSSTQEDLFDQSSKTASDGCSTP). S297 is subject to Phosphoserine. T305 carries the post-translational modification Phosphothreonine. Residues S368, S382, and S397 each carry the phosphoserine modification. Residues 407-419 (QKLHDDEAMETEK) show a composition bias toward basic and acidic residues. Residues 426 to 442 (PAVSPQASTPVSRSTPV) are compositionally biased toward polar residues. Residues S429, S452, and S464 each carry the phosphoserine modification. The segment covering 481 to 490 (HSSSLTVECS) has biased composition (polar residues). A compositionally biased stretch (basic and acidic residues) spans 491–501 (KTSESEPKNFT). A phosphoserine mark is found at S507, S518, S523, and S525. The segment covering 517-528 (LSTSEYSQSSKM) has biased composition (polar residues). Phosphothreonine is present on residues T543 and T548. S552 and S579 each carry phosphoserine. Residues 566 to 582 (VLVTPSQDDQVEMSQNV) are compositionally biased toward polar residues. Positions 583–599 (DKAKEDETEDRGDCKGR) are enriched in basic and acidic residues. Over residues 614–634 (DSGSQAVPSPATRSEALSSVL) the composition is skewed to polar residues. Phosphoserine is present on residues S622, S627, S631, and S632. Basic and acidic residues predominate over residues 640–649 (MDTKEHHPEE). The residue at position 662 (T662) is a Phosphothreonine. A compositionally biased stretch (basic and acidic residues) spans 666–675 (SHREEPKEEP). Residues S684, S716, S719, and S763 each carry the phosphoserine modification. A disordered region spans residues 754 to 870 (KEPSPRADVS…DDKQLGPEGA (117 aa)). Positions 790–818 (AENRLDTPEEKRIECDGDSKAETTEKDAV) are enriched in basic and acidic residues. At S822 the chain carries Phosphoserine. Basic and acidic residues predominate over residues 830 to 839 (VRDEPVRPDQ). The residue at position 912 (T912) is a Phosphothreonine. A Glycyl lysine isopeptide (Lys-Gly) (interchain with G-Cter in SUMO2) cross-link involves residue K920. The tract at residues 927 to 1017 (STPIGISNYP…GSTAIAEPVA (91 aa)) is disordered. Residues 935-949 (YPESTIATSDVTSES) are compositionally biased toward polar residues. Residues 961-975 (EKGDSESAPEMDGKL) show a composition bias toward basic and acidic residues. S965 is subject to Phosphoserine. Residue K974 forms a Glycyl lysine isopeptide (Lys-Gly) (interchain with G-Cter in SUMO2) linkage. S1018 is modified (phosphoserine). Disordered stretches follow at residues 1034 to 1144 (QEKE…MDRP), 1178 to 1231 (GTST…PHGH), and 1267 to 1478 (TEET…DSSS). The segment covering 1060 to 1074 (EEDKERPDVTPKLRQ) has biased composition (basic and acidic residues). A phosphoserine mark is found at S1075 and S1096. Residues 1099-1112 (SQQRASQEQRASQE) are compositionally biased toward low complexity. S1115 bears the Phosphoserine mark. The segment covering 1178–1197 (GTSTAEQNSGKQDATVQTER) has biased composition (polar residues). Residue T1211 is modified to Phosphothreonine. Residues S1213 and S1216 each carry the phosphoserine modification. Acidic residues predominate over residues 1269–1282 (ETEEPIVECQECET). Positions 1295-1326 (DLGDISSFSSKASSSHHTSSGTSLSAIHSSGS) are enriched in low complexity. The residue at position 1314 (S1314) is a Phosphoserine. At R1329 the chain carries Omega-N-methylarginine. At S1339 the chain carries Phosphoserine. R1352 carries the omega-N-methylarginine modification. S1359 is modified (phosphoserine). K1362 participates in a covalent cross-link: Glycyl lysine isopeptide (Lys-Gly) (interchain with G-Cter in SUMO2). S1365 carries the phosphoserine modification. Positions 1393 to 1400 (RGRGRRGR) match the GAR motif. 2 positions are modified to phosphoserine: S1423 and S1427. K1431 is covalently cross-linked (Glycyl lysine isopeptide (Lys-Gly) (interchain with G-Cter in SUMO1); alternate). Residue K1431 forms a Glycyl lysine isopeptide (Lys-Gly) (interchain with G-Cter in SUMO2); alternate linkage. 4 positions are modified to phosphoserine: S1457, S1459, S1470, and S1471. The span at 1469-1478 (GSSDGLDSSS) shows a compositional bias: low complexity. A tudor-like region spans residues 1481–1600 (NSFVGLRVVA…NRLREQYGLG (120 aa)). The tract at residues 1492–1520 (WSSNGYFYSGKITRDVGAGKYKLLFDDGY) is interaction with dimethylated histone H4. Residue K1560 forms a Glycyl lysine isopeptide (Lys-Gly) (interchain with G-Cter in SUMO1); alternate linkage. Residue K1560 forms a Glycyl lysine isopeptide (Lys-Gly) (interchain with G-Cter in SUMO2); alternate linkage. A UDR motif is present at residues 1601–1628 (PYEAVTPLTKAADISLDNLVEGKRKRRS). T1606 is subject to Phosphothreonine. Phosphoserine is present on residues S1615, S1628, and S1632. A disordered region spans residues 1624 to 1715 (RKRRSNISSP…IGEPSVLEEP (92 aa)). Positions 1631-1648 (SSPVTPTAASSSSTTPTR) are enriched in low complexity. T1635 and T1645 each carry phosphothreonine. S1653, S1670, and S1675 each carry phosphoserine. A Glycyl lysine isopeptide (Lys-Gly) (interchain with G-Cter in ubiquitin) cross-link involves residue K1682. A phosphoserine mark is found at S1698 and S1756. BRCT domains follow at residues 1749-1845 (LDGP…NYLL) and 1861-1961 (PREN…QHPK).

In terms of assembly, homoligomer. Interacts with p53/TP53 (via the central domain). Interacts with DCLRE1C. Interacts with histone H2AX and this requires phosphorylation of H2AX on 'Ser-139'. Interacts with histone H4 that has been dimethylated at 'Lys-20' (H4K20me2). Has low affinity for histone H4 containing monomethylated 'Lys-20' (H4K20me1). Does not bind histone H4 containing unmethylated or trimethylated 'Lys-20' (H4K20me3). Has low affinity for histone H3 that has been dimethylated on 'Lys-79'. Has very low affinity for histone H3 that has been monomethylated on 'Lys-79' (in vitro). Does not bind unmethylated histone H3. Interacts with histone H2A monoubiquitinated at 'Lys-15' (H2AK15Ub). Interacts with PWWP3A/EXPAND1. Interacts with CHEK2; modulates CHEK2 phosphorylation at 'Thr-68' in response to infrared. Interacts with MSL1; this interaction may be required for MSL1 DNA repair activity, but not for histone acetyltransferase activity. Interacts (when phosphorylated by ATM) with RIF1. Interacts (via the Tudor-like domain) with NUDT16L1/TIRR; interaction masks the Tudor-like domain and prevents recruitment to chromatin. Interacts with PAXIP1. Interacts with IFI202A. Interacts with SHLD2. Interacts (when phosphorylated) with TOPBP1. Interacts with GFI1; promoting methylation by PRMT1. Interacts with (phosphorylated) DYNLL1; specifically binds DYNLL1 phosphorylated at 'Ser-88' and promotes its recruitment to double stand breaks (DSBs). Post-translationally, phosphorylated at basal level in the absence of DNA damage. Phosphorylated by ATM in response to DNA damage: phosphorylation at different sites promotes interaction with different set of proteins: phosphorylation at the N-terminus by ATM (residues from 11-181) promotes interaction with PAXIP1 and non-homologous end joining (NHEJ) of dysfunctional telomeres. Phosphorylation by ATM at residues that are located more C-terminus (residues 300-650) leads to promote interaction with RIF1. Interaction with RIF1 leads to disrupt interaction with NUDT16L1/TIRR. Phosphorylation at Thr-1606 and Ser-1615 in the UDR motif blocks interaction with H2AK15ub. Dephosphorylated by PPP4C. Hyperphosphorylation during mitosis correlates with its exclusion from chromatin and DNA lesions. Hyperphosphorylated in an ATR-dependent manner in response to DNA damage induced by UV irradiation. Dephosphorylated by PPP5C. Phosphorylation at Ser-368 and Thr-662 promotes interaction with TOPBP1. Phosphorylated by VRK1. In terms of processing, asymmetrically dimethylated on Arg residues by PRMT1. Methylation is required for DNA binding. Monoubiquitinated at Lys-1682 by MSL2 is reponse to DNA damage, leading to its stabilization.

The protein localises to the nucleus. Its subcellular location is the chromosome. The protein resides in the centromere. It localises to the kinetochore. Double-strand break (DSB) repair protein involved in response to DNA damage, telomere dynamics and class-switch recombination (CSR) during antibody genesis. Plays a key role in the repair of double-strand DNA breaks (DSBs) in response to DNA damage by promoting non-homologous end joining (NHEJ)-mediated repair of DSBs and specifically counteracting the function of the homologous recombination (HR) repair protein BRCA1. In response to DSBs, phosphorylation by ATM promotes interaction with RIF1 and dissociation from NUDT16L1/TIRR, leading to recruitment to DSBs sites. Recruited to DSBs sites by recognizing and binding histone H2A monoubiquitinated at 'Lys-15' (H2AK15Ub) and histone H4 dimethylated at 'Lys-20' (H4K20me2), two histone marks that are present at DSBs sites. Required for immunoglobulin class-switch recombination (CSR) during antibody genesis, a process that involves the generation of DNA DSBs. Participates in the repair and the orientation of the broken DNA ends during CSR. In contrast, it is not required for classic NHEJ and V(D)J recombination. Promotes NHEJ of dysfunctional telomeres. The polypeptide is TP53-binding protein 1 (Mus musculus (Mouse)).